Here is a 271-residue protein sequence, read N- to C-terminus: Proteasome inhibitor PI31 subunit (271 aa).

The residue at position 2 (alanine 2) is an N-acetylalanine. The segment at alanine 2–arginine 150 is important for homodimerization and interaction with FBXO7. 2 positions are modified to phosphoserine: serine 153 and serine 189. Arginine 205 carries the omega-N-methylarginine modification. The residue at position 219 (arginine 219) is an Asymmetric dimethylarginine. The disordered stretch occupies residues leucine 221–leucine 271. Arginine 231 carries the omega-N-methylarginine modification. Serine 252 carries the post-translational modification Phosphoserine. A compositionally biased stretch (pro residues) spans glycine 255 to glycine 265.

The protein belongs to the proteasome inhibitor PI31 family. As to quaternary structure, monomer and homodimer. Interacts with FBXO7.

The protein resides in the cytoplasm. The protein localises to the endoplasmic reticulum. Functionally, plays an important role in control of proteasome function. Inhibits the hydrolysis of protein and peptide substrates by the 20S proteasome. Also inhibits the activation of the proteasome by the proteasome regulatory proteins PA700 and PA28. The protein is Proteasome inhibitor PI31 subunit (Psmf1) of Rattus norvegicus (Rat).